The sequence spans 1286 residues: Protein patched (1286 aa).

At 1 to 76 the chain is on the cytoplasmic side; that stretch reads MDRDSLPRVP…GSSVQKHAGK (76 aa). Residues 77–92 traverse the membrane as a helical segment; that stretch reads VLFVAILVLSTFCVGL. Residues 93 to 427 lie on the Extracellular side of the membrane; sequence KSAQIHSKVH…DDILAKFSHP (335 aa). N-linked (GlcNAc...) asparagine glycans are attached at residues N142, N298, N335, and N388. The helical transmembrane segment at 428–448 threads the bilayer; the sequence is SALSIVIGVAVTVLYAFCTLL. The SSD domain occupies 428-583; it reads SALSIVIGVA…LLVFPAMISL (156 aa). Topologically, residues 449-465 are cytoplasmic; the sequence is RWRDPVRGQSSVGVAGV. The chain crosses the membrane as a helical span at residues 466-486; sequence LLMCFSTAAGLGLSALLGIVF. Residues 487–492 lie on the Extracellular side of the membrane; sequence NAASTQ. A helical membrane pass occupies residues 493 to 511; that stretch reads VVPFLALGLGVDHIFMLTA. Residues 512–532 lie on the Cytoplasmic side of the membrane; sequence AYAESNRREQTKLILKKVGPS. The helical transmembrane segment at 533–553 threads the bilayer; that stretch reads ILFSACSTAGSFFAAAFIPVP. Residues 554-562 are Extracellular-facing; the sequence is ALKVFCLQA. A helical membrane pass occupies residues 563–583; sequence AIVMCSNLAAALLVFPAMISL. Topologically, residues 584-677 are cytoplasmic; that stretch reads DLRRRTAGRA…QHYTPFLMRS (94 aa). A helical transmembrane segment spans residues 678-699; it reads WVKFLTVMGFLAALISSLYAST. Topologically, residues 700-931 are extracellular; that stretch reads RLQDGLDIID…IRDLSVKYEG (232 aa). N-linked (GlcNAc...) asparagine glycosylation occurs at N807. The helical transmembrane segment at 932–952 threads the bilayer; sequence FGLPNYPSGIPFIFWEQYMTL. The Cytoplasmic segment spans residues 953–955; sequence RSS. A helical membrane pass occupies residues 956–976; sequence LAMILACVLLAALVLVSLLLL. The Extracellular portion of the chain corresponds to 977-1007; sequence SVWAAVLVILSVLASLAQIFGAMTLLGIKLS. Residues 1008 to 1028 form a helical membrane-spanning segment; sequence AIPAVILILSVGMMLCFNVLI. Over 1029 to 1056 the chain is Cytoplasmic; that stretch reads SLGFMTSVGNRQRRVQLSMQMSLGPLVH. A helical membrane pass occupies residues 1057 to 1077; sequence GMLTSGVAVFMLSTSPFEFVI. The Extracellular segment spans residues 1078-1082; the sequence is RHFCW. The helical transmembrane segment at 1083 to 1103 threads the bilayer; that stretch reads LLLVVLCVGACNSLLVFPILL. The Cytoplasmic portion of the chain corresponds to 1104–1286; that stretch reads SMVGPEAELV…RAVRSYNFTS (183 aa). The segment at 1116 to 1237 is disordered; the sequence is EHPDRISTPS…PPPFPTAYPP (122 aa). Polar residues-rich tracts occupy residues 1141–1152 and 1165–1191; these read VQGSRSSRGSCQ and PSLTTITEEPQSWKSSNSSIQMPNDWT. Residues 1199–1216 show a composition bias toward low complexity; sequence PASYAAPPPAYHKAAAQQ. The segment covering 1224 to 1235 has biased composition (pro residues); it reads PTTPPPPFPTAY.

The protein belongs to the patched family. In terms of assembly, interacts (via C-terminal cytoplasmic region) with CG5504/l(2)tid; the interaction is probably direct. Interacts with hh/hedgehog.

The protein localises to the membrane. Functionally, segmentation polarity protein. Acts as a receptor for the hedgehog protein (hh). Associates with the smoothened protein (SMO) to transduce the hedgehog signal leading to the activation of wingless, decapentaplegic and patched itself. Participates in cell interactions that establish pattern within the segment and the imaginal disks during development. In the absence of HH, represses the constitutive signaling activity of smo through fused (FU). In Drosophila melanogaster (Fruit fly), this protein is Protein patched.